We begin with the raw amino-acid sequence, 266 residues long: MTQYYFLSSFLPTQLPESVPLFSISDLDDLLYLNLSENDLCNYGLLKRFFDFENFAFFWAGKPIPFSFGEVTQENVERMLSSQQWSDDNDFEDFFKDFLMNHKSSQDRLNHFSDLFREFLSYHQTNSSKFLRDYFRFQQQLRVVLAGFRARVLNMDVSYVLRDEDSSDPVVLEVLMQKDSPNYELPEEFSDLQGVLDDYGLLPHTLNRALALYQFHKLEGFCSDSYFDGNVILARCATYMFAIRNSLASVEKGREIINHIEKAIKW.

This sequence belongs to the chlamydial CPn_0087/CT_309/TC_0583 family.

This is an uncharacterized protein from Chlamydia pneumoniae (Chlamydophila pneumoniae).